A 260-amino-acid polypeptide reads, in one-letter code: Malonyl-[acyl-carrier protein] O-methyltransferase (260 aa).

The protein belongs to the methyltransferase superfamily.

The catalysed reaction is malonyl-[ACP] + S-adenosyl-L-methionine = malonyl-[ACP] methyl ester + S-adenosyl-L-homocysteine. It functions in the pathway cofactor biosynthesis; biotin biosynthesis. Converts the free carboxyl group of a malonyl-thioester to its methyl ester by transfer of a methyl group from S-adenosyl-L-methionine (SAM). It allows to synthesize pimeloyl-ACP via the fatty acid synthetic pathway. The sequence is that of Malonyl-[acyl-carrier protein] O-methyltransferase from Haemophilus influenzae (strain ATCC 51907 / DSM 11121 / KW20 / Rd).